Here is a 344-residue protein sequence, read N- to C-terminus: Probable dual-specificity RNA methyltransferase RlmN (344 aa).

Glutamate 92 (proton acceptor) is an active-site residue. The 228-residue stretch at 98-325 folds into the Radical SAM core domain; the sequence is DEDRATLCVS…TTIRASRGED (228 aa). Residues cysteine 105 and cysteine 330 are joined by a disulfide bond. Residues cysteine 112, cysteine 116, and cysteine 119 each contribute to the [4Fe-4S] cluster site. S-adenosyl-L-methionine is bound by residues 157-158, serine 189, 211-213, and histidine 287; these read GE and SLH. The S-methylcysteine intermediate role is filled by cysteine 330.

This sequence belongs to the radical SAM superfamily. RlmN family. [4Fe-4S] cluster is required as a cofactor.

The protein resides in the cytoplasm. It carries out the reaction adenosine(2503) in 23S rRNA + 2 reduced [2Fe-2S]-[ferredoxin] + 2 S-adenosyl-L-methionine = 2-methyladenosine(2503) in 23S rRNA + 5'-deoxyadenosine + L-methionine + 2 oxidized [2Fe-2S]-[ferredoxin] + S-adenosyl-L-homocysteine. The enzyme catalyses adenosine(37) in tRNA + 2 reduced [2Fe-2S]-[ferredoxin] + 2 S-adenosyl-L-methionine = 2-methyladenosine(37) in tRNA + 5'-deoxyadenosine + L-methionine + 2 oxidized [2Fe-2S]-[ferredoxin] + S-adenosyl-L-homocysteine. In terms of biological role, specifically methylates position 2 of adenine 2503 in 23S rRNA and position 2 of adenine 37 in tRNAs. The protein is Probable dual-specificity RNA methyltransferase RlmN of Bacteroides fragilis (strain YCH46).